The following is a 101-amino-acid chain: uncharacterized protein (101 aa).

The segment at 76–101 is disordered; sequence KGNVTRRRKKTHLGNDDGKKEAQEKM. Residues 88 to 101 are compositionally biased toward basic and acidic residues; the sequence is LGNDDGKKEAQEKM.

This is an uncharacterized protein from Homo sapiens (Human).